A 562-amino-acid polypeptide reads, in one-letter code: Calmodulin-binding protein 60 F (562 aa).

The disordered stretch occupies residues 1–22 (MENSMNNRGHGHNQEHADNLPE). A calmodulin-binding region spans residues 5–84 (MNNRGHGHNQ…STSRSTEPNK (80 aa)). Over residues 12–22 (HNQEHADNLPE) the composition is skewed to basic and acidic residues. Positions 154–273 (EDDKDWTREH…ALHKKLLKSN (120 aa)) are DNA-binding.

The protein belongs to the plant ACBP60 protein family. In terms of assembly, interacts with calmodulin (CaM).

The protein localises to the nucleus. Transcription activator that binds DNA in a sequence-specific manner, likely 5'-GAAATTTTGG-3', to promote the expression of target genes. This Arabidopsis thaliana (Mouse-ear cress) protein is Calmodulin-binding protein 60 F.